The sequence spans 436 residues: 3-ketoacyl-CoA thiolase (436 aa).

C99 (acyl-thioester intermediate) is an active-site residue. Active-site proton acceptor residues include H392 and C422.

This sequence belongs to the thiolase-like superfamily. Thiolase family. Heterotetramer of two alpha chains (FadJ) and two beta chains (FadI).

It localises to the cytoplasm. It catalyses the reaction an acyl-CoA + acetyl-CoA = a 3-oxoacyl-CoA + CoA. Its pathway is lipid metabolism; fatty acid beta-oxidation. In terms of biological role, catalyzes the final step of fatty acid oxidation in which acetyl-CoA is released and the CoA ester of a fatty acid two carbons shorter is formed. The polypeptide is 3-ketoacyl-CoA thiolase (Escherichia coli O6:H1 (strain CFT073 / ATCC 700928 / UPEC)).